A 465-amino-acid polypeptide reads, in one-letter code: Neuromedin-K receptor (465 aa).

The Extracellular portion of the chain corresponds to 1–84 (MATLPAAETW…TNQFVQPSWR (84 aa)). N-linked (GlcNAc...) asparagine glycans are attached at residues Asn-23, Asn-50, and Asn-73. Residues 85 to 107 (IALWSLAYGVVVAVAVLGNLIVI) form a helical membrane-spanning segment. The Cytoplasmic segment spans residues 108–117 (WIILAHKRMR). A helical membrane pass occupies residues 118-139 (TVTNYFLVNLAFSDASMAAFNT). At 140-159 (LVNFIYALHSEWYFGANYCR) the chain is on the extracellular side. An intrachain disulfide couples Cys-158 to Cys-233. The chain crosses the membrane as a helical span at residues 160-181 (FQNFFPITAVFASIYSMTAIAV). Topologically, residues 182–201 (DRYMAIIDPLKPRLSATATK) are cytoplasmic. A helical transmembrane segment spans residues 202-222 (IVIGSIWILAFLLAFPQCLYS). The Extracellular portion of the chain corresponds to 223–245 (KTKVMPGRTLCFVQWPEGPKQHF). Residues 246-270 (TYHIIVIILVYCFPLLIMGITYTIV) traverse the membrane as a helical segment. The Cytoplasmic segment spans residues 271-299 (GITLWGGEIPGDTCDKYHEQLKAKRKVVK). The helical transmembrane segment at 300–321 (MMIIVVMTFAICWLPYHIYFIL) threads the bilayer. Over 322–334 (TAIYQQLNRWKYI) the chain is Extracellular. The helical transmembrane segment at 335-359 (QQVYLASFWLAMSSTMYNPIIYCCL) threads the bilayer. Residues 360-465 (NKRFRAGFKR…SPYTSVDEYS (106 aa)) lie on the Cytoplasmic side of the membrane. The S-palmitoyl cysteine moiety is linked to residue Cys-374. Residues 415–465 (PNDADTTRSSRKKRATPRDPSFNGCSRRNSKSASATSSFISSPYTSVDEYS) are disordered. Positions 445–465 (KSASATSSFISSPYTSVDEYS) are enriched in low complexity.

It belongs to the G-protein coupled receptor 1 family. In terms of processing, the anchoring of this receptor to the plasma membrane is probably mediated by the palmitoylation of a cysteine residue.

Its subcellular location is the cell membrane. Its function is as follows. This is a receptor for the tachykinin neuropeptide neuromedin-K (neurokinin B). It is associated with G proteins that activate a phosphatidylinositol-calcium second messenger system. The rank order of affinity of this receptor to tachykinins is: neuromedin-K &gt; substance K &gt; substance P. The sequence is that of Neuromedin-K receptor (TACR3) from Homo sapiens (Human).